A 357-amino-acid polypeptide reads, in one-letter code: Putative minor fimbrial subunit PmfE (357 aa).

Residues 1-28 form the signal peptide; the sequence is MILNKKNIHSKSVMLFCAGIVSLMPLHA.

Its subcellular location is the fimbrium. In Proteus mirabilis (strain HI4320), this protein is Putative minor fimbrial subunit PmfE (pmfE).